An 857-amino-acid chain; its full sequence is Median body protein (857 aa).

Coiled-coil stretches lie at residues 169–546 and 571–793; these read HNAL…MRTE and LAHL…TKAM.

The protein localises to the cytoplasm. Its subcellular location is the cytoskeleton. Functionally, structural component of the ventral disk involved in maintanance of a domed conformation of the disk required for proper attachment. May have a role in immobilizing the microtubules between cell divisions. The sequence is that of Median body protein from Giardia intestinalis (strain ATCC 50803 / WB clone C6) (Giardia lamblia).